Consider the following 609-residue polypeptide: Tyrosyl-DNA phosphodiesterase 1 (609 aa).

A compositionally biased stretch (polar residues) spans 1–12 (MSQESSYGKWTI). The interval 1 to 154 (MSQESSYGKW…EYETSGEGQD (154 aa)) is disordered. Ser-61, Ser-119, and Ser-132 each carry phosphoserine. Basic and acidic residues predominate over residues 127–143 (KVEDRSPPDSHRAQRAD). Thr-148 carries the phosphothreonine modification. Position 149 is a phosphoserine (Ser-149). His-264 serves as the catalytic Nucleophile. Substrate is bound at residue Lys-266. The interval 401–404 (SIGS) is interaction with DNA. His-494 serves as the catalytic Proton donor/acceptor. Lys-496 is a substrate binding site.

The protein belongs to the tyrosyl-DNA phosphodiesterase family. In terms of assembly, monomer.

Its subcellular location is the nucleus. The protein resides in the cytoplasm. Functionally, DNA repair enzyme that can remove a variety of covalent adducts from DNA through hydrolysis of a 3'-phosphodiester bond, giving rise to DNA with a free 3' phosphate. Catalyzes the hydrolysis of dead-end complexes between DNA and the topoisomerase I active site tyrosine residue. Hydrolyzes 3'-phosphoglycolates on protruding 3' ends on DNA double-strand breaks due to DNA damage by radiation and free radicals. Acts on blunt-ended double-strand DNA breaks and on single-stranded DNA. Has low 3'exonuclease activity and can remove a single nucleoside from the 3'end of DNA and RNA molecules with 3'hydroxyl groups. Has no exonuclease activity towards DNA or RNA with a 3'phosphate. The sequence is that of Tyrosyl-DNA phosphodiesterase 1 (Tdp1) from Rattus norvegicus (Rat).